The chain runs to 479 residues: UDP-N-acetylmuramate--L-alanine ligase (479 aa).

128 to 134 (GAHGKTT) serves as a coordination point for ATP.

Belongs to the MurCDEF family.

It is found in the cytoplasm. The enzyme catalyses UDP-N-acetyl-alpha-D-muramate + L-alanine + ATP = UDP-N-acetyl-alpha-D-muramoyl-L-alanine + ADP + phosphate + H(+). The protein operates within cell wall biogenesis; peptidoglycan biosynthesis. In terms of biological role, cell wall formation. The polypeptide is UDP-N-acetylmuramate--L-alanine ligase (Psychrobacter cryohalolentis (strain ATCC BAA-1226 / DSM 17306 / VKM B-2378 / K5)).